The primary structure comprises 402 residues: Protein RETARDED ROOT GROWTH-LIKE (402 aa).

A helical membrane pass occupies residues 375–395; the sequence is SATLEWLIIILISMEIAISFY.

It belongs to the RMD1/sif2 family. As to expression, highly expressed in germinating seeds and developing seedlings. Also present at low levels in seedlings, roots, leaves, stems and flowers, and barely in siliques.

The protein resides in the mitochondrion membrane. The protein localises to the mitochondrion. In terms of biological role, mediates abscisic acid (ABA) signal transduction through mitochondrial retrograde regulation involving ABI4 during seed germination and seedling growth, and leading to the production of reactive oxygen species (ROS) by the alternative respiratory pathway. Required for the maintenance of mitochondrial structure. This is Protein RETARDED ROOT GROWTH-LIKE from Arabidopsis thaliana (Mouse-ear cress).